The primary structure comprises 505 residues: Cytochrome P450 52C1 (505 aa).

A helical membrane pass occupies residues 4–21 (LFCFLAGIIVVYKAAQYY). Residue C453 coordinates heme.

It belongs to the cytochrome P450 family. The cofactor is heme.

It localises to the membrane. Functionally, together with an NADPH cytochrome P450 the enzyme system catalyzes the terminal hydroxylation as the first step in the assimilation of alkanes and fatty acids. This chain is Cytochrome P450 52C1 (CYP52C1), found in Candida tropicalis (Yeast).